The following is a 359-amino-acid chain: 4-hydroxy-3-methylbut-2-en-1-yl diphosphate synthase (flavodoxin) (359 aa).

Positions 264, 267, 299, and 306 each coordinate [4Fe-4S] cluster.

This sequence belongs to the IspG family. The cofactor is [4Fe-4S] cluster.

The catalysed reaction is (2E)-4-hydroxy-3-methylbut-2-enyl diphosphate + oxidized [flavodoxin] + H2O + 2 H(+) = 2-C-methyl-D-erythritol 2,4-cyclic diphosphate + reduced [flavodoxin]. It participates in isoprenoid biosynthesis; isopentenyl diphosphate biosynthesis via DXP pathway; isopentenyl diphosphate from 1-deoxy-D-xylulose 5-phosphate: step 5/6. In terms of biological role, converts 2C-methyl-D-erythritol 2,4-cyclodiphosphate (ME-2,4cPP) into 1-hydroxy-2-methyl-2-(E)-butenyl 4-diphosphate. The sequence is that of 4-hydroxy-3-methylbut-2-en-1-yl diphosphate synthase (flavodoxin) from Helicobacter pylori (strain Shi470).